The primary structure comprises 926 residues: Probable zinc protease PqqL (926 aa).

His79 lines the Zn(2+) pocket. Glu82 acts as the Proton acceptor in catalysis. Residues His83 and Glu159 each coordinate Zn(2+).

The protein belongs to the peptidase M16 family. Requires Zn(2+) as cofactor.

This chain is Probable zinc protease PqqL (pqqL), found in Haemophilus influenzae (strain ATCC 51907 / DSM 11121 / KW20 / Rd).